A 283-amino-acid chain; its full sequence is Movement protein (283 aa).

Residues 233–283 form a disordered region; it reads SVKRTKSENTPGKRRVNVDSVSLGLGKGKSVSAKNEDTESVFDDGILDSDS. The span at 270–283 shows a compositional bias: acidic residues; the sequence is TESVFDDGILDSDS.

It belongs to the tobamovirus movement protein family.

It is found in the host cytoplasm. Its subcellular location is the host cytoskeleton. The protein resides in the host cell junction. The protein localises to the host plasmodesma. Its function is as follows. Transports viral genome to neighboring plant cells directly through plasmosdesmata, without any budding. The movement protein allows efficient cell to cell propagation, by bypassing the host cell wall barrier. Forms a ribonucleoprotein complex with viral RNA. Binds microtubules and modulates microtubule stability. Can bind double-stranded DNA. This chain is Movement protein (MP), found in Crotalaria juncea (Sunn hemp).